The sequence spans 847 residues: Pollen-specific leucine-rich repeat extensin-like protein 2 (847 aa).

Positions 1–20 (MERPFGCFFILLLISYTVVA) are cleaved as a signal peptide. LRR repeat units follow at residues 45–71 (INKV…AWKK), 106–130 (LTVV…LGLM), 131–153 (TDLA…SLSK), 155–178 (ALMY…SLSW), 179–202 (PSLK…IFDK), 204–224 (LDAI…TIGK), 226–248 (KASV…IGNM), and 249–273 (KNLN…GLLN). N-linked (GlcNAc...) asparagine glycosylation is found at Asn260 and Asn274. LRR repeat units follow at residues 296–319 (LASV…KFCK) and 321–343 (PNLD…CVPG). A disordered region spans residues 381–847 (KDKCSGGSNG…SPPPPMFQGY (467 aa)). The segment covering 438–484 (PKHESPKPEEPENKHELPKQKESPKPQPSKPEDSPKPEQPKPEESPK) has biased composition (basic and acidic residues). Pro residues-rich tracts occupy residues 485-499 (PEQP…PVSP) and 533-642 (VPPP…PPPT). Residues 522 to 847 (SPPPPKVEDT…SPPPPMFQGY (326 aa)) form a contains the Ser-Pro(4) repeats region. 3 stretches are compositionally biased toward polar residues: residues 667–682 (QVPT…QILS), 688–720 (TPVQ…SPVQ), and 726–752 (QAPT…SQAP). Low complexity-rich tracts occupy residues 768-783 (PVQS…SSPE) and 797-811 (NPSS…TDTS). The segment covering 838–847 (SPPPPMFQGY) has biased composition (pro residues).

Post-translationally, hydroxylated on proline residues in the S-P-P-P-P repeat. O-glycosylated on hydroxyprolines. Expressed in flowers, stamen, pollen, and pollinated carpels (at protein level).

It is found in the secreted. Its subcellular location is the cell wall. In terms of biological role, modulates cell morphogenesis by regulating cell wall formation and assembly, and/or growth polarization. In Arabidopsis thaliana (Mouse-ear cress), this protein is Pollen-specific leucine-rich repeat extensin-like protein 2 (PEX2).